A 269-amino-acid polypeptide reads, in one-letter code: Seven in absentia homolog 3 (269 aa).

The SIAH-type; degenerate zinc-finger motif lies at 61 to 132 (GSFHPHHLSH…VVPHLRQIHR (72 aa)). 4 residues coordinate Zn(2+): Cys-107, Cys-114, His-126, and His-131.

The protein belongs to the SINA (Seven in absentia) family.

It is found in the mitochondrion. Its function is as follows. Negative regulator of PRKN translocation to damaged mitochondria. Acts probably by destabilizing PINK1 protein, hence inhibiting PRKN targeting to dysfunctional depolarized mitochondria. This chain is Seven in absentia homolog 3 (SIAH3), found in Homo sapiens (Human).